Reading from the N-terminus, the 767-residue chain is Photosystem I P700 chlorophyll a apoprotein A1 (767 aa).

The tract at residues 1-22 (MTISPPESGEKNKKVLEDPVKA) is disordered. The span at 8 to 22 (SGEKNKKVLEDPVKA) shows a compositional bias: basic and acidic residues. The next 8 helical transmembrane spans lie at 76 to 99 (IFSA…FHGA), 162 to 185 (LMAL…YHYH), 201 to 225 (LNHH…HIGA), 309 to 327 (IAHH…GHLY), 368 to 391 (RHAQ…HHMY), 407 to 433 (LGLF…IAMV), 455 to 477 (ALIS…LYIH), and 558 to 576 (LMIH…LILL). The [4Fe-4S] cluster site is built by cysteine 600 and cysteine 609. 2 helical membrane-spanning segments follow: residues 616-637 (HVFL…HFSW) and 681-703 (ISMY…MFLF). Histidine 692 is a binding site for divinylchlorophyll a'. Divinyl chlorophyll a-binding residues include methionine 700 and tyrosine 708. Tryptophan 709 contributes to the phylloquinone binding site. The helical transmembrane segment at 741 to 761 (AVGVAHFLLGGIATTWAFFHA) threads the bilayer.

The protein belongs to the PsaA/PsaB family. In terms of assembly, the PsaA/B heterodimer binds the P700 divinyl chlorophyll special pair and subsequent electron acceptors. PSI consists of a core antenna complex that captures photons, and an electron transfer chain that converts photonic excitation into a charge separation. The cyanobacterial PSI reaction center is composed of one copy each of PsaA,B,C,D,E,F,I,J,K,L,M and X, and forms trimeric complexes. It depends on PSI electron transfer chain: 5 divinyl chlorophyll a, 1 divinyl chlorophyll a', 2 phylloquinones and 3 4Fe-4S clusters. PSI core antenna: 90 divinyl chlorophyll a, 22 carotenoids, 3 phospholipids and 1 galactolipid. P700 is a divinyl chlorophyll a/divinyl chlorophyll a' dimer, A0 is one or more divinyl chlorophyll a, A1 is one or both phylloquinones and FX is a shared 4Fe-4S iron-sulfur center. as a cofactor.

It localises to the cellular thylakoid membrane. It carries out the reaction reduced [plastocyanin] + hnu + oxidized [2Fe-2S]-[ferredoxin] = oxidized [plastocyanin] + reduced [2Fe-2S]-[ferredoxin]. Its function is as follows. PsaA and PsaB bind P700, the primary electron donor of photosystem I (PSI), as well as the electron acceptors A0, A1 and FX. PSI is a plastocyanin/cytochrome c6-ferredoxin oxidoreductase, converting photonic excitation into a charge separation, which transfers an electron from the donor P700 chlorophyll pair to the spectroscopically characterized acceptors A0, A1, FX, FA and FB in turn. Oxidized P700 is reduced on the lumenal side of the thylakoid membrane by plastocyanin or cytochrome c6. The protein is Photosystem I P700 chlorophyll a apoprotein A1 of Prochlorococcus marinus (strain MIT 9312).